A 161-amino-acid chain; its full sequence is Allophycocyanin beta chain (161 aa).

Residue Asn71 is modified to N4-methylasparagine. Cys81 is a binding site for (2R,3E)-phycocyanobilin.

The protein belongs to the phycobiliprotein family. Heterodimer of an alpha and a beta chain. Contains one covalently linked phycocyanobilin chromophore.

It is found in the plastid. The protein resides in the chloroplast thylakoid membrane. Functionally, light-harvesting photosynthetic bile pigment-protein from the phycobiliprotein complex. Allophycocyanin has a maximum absorption at approximately 650 nanometers. This chain is Allophycocyanin beta chain (apcB), found in Aglaothamnion neglectum (Red alga).